The following is a 138-amino-acid chain: Basic phospholipase A2 Bs-N6 (138 aa).

The first 16 residues, 1 to 16, serve as a signal peptide directing secretion; that stretch reads MRTLWIVAVLLVGVEG. 7 disulfides stabilise this stretch: Cys-42–Cys-131, Cys-44–Cys-60, Cys-59–Cys-111, Cys-65–Cys-138, Cys-66–Cys-104, Cys-73–Cys-97, and Cys-91–Cys-102. 3 residues coordinate Ca(2+): Tyr-43, Gly-45, and Gly-47. His-63 is a catalytic residue. Asp-64 contacts Ca(2+). Asp-105 is an active-site residue.

Monomer. Ca(2+) is required as a cofactor. Post-translationally, contains 7 disulfide bonds. As to expression, expressed by the venom gland.

The protein localises to the secreted. It carries out the reaction a 1,2-diacyl-sn-glycero-3-phosphocholine + H2O = a 1-acyl-sn-glycero-3-phosphocholine + a fatty acid + H(+). Its function is as follows. Snake venom phospholipase A2 (PLA2) that shows myotoxic activities. PLA2 catalyzes the calcium-dependent hydrolysis of the 2-acyl groups in 3-sn-phosphoglycerides. The sequence is that of Basic phospholipase A2 Bs-N6 from Bothriechis schlegelii (Eyelash palm pitviper).